The sequence spans 121 residues: Histone H2B, sperm (121 aa).

Positions 1 to 30 are disordered; the sequence is MPPKSGKGQKKAGKAKGAPRSDKKRRRKRK. At Pro-2 the chain carries N,N-dimethylproline. Ser-108 carries O-linked (GlcNAc) serine glycosylation. Lys-116 is covalently cross-linked (Glycyl lysine isopeptide (Lys-Gly) (interchain with G-Cter in ubiquitin)).

Belongs to the histone H2B family. As to quaternary structure, the nucleosome is a histone octamer containing two molecules each of H2A, H2B, H3 and H4 assembled in one H3-H4 heterotetramer and two H2A-H2B heterodimers. The octamer wraps approximately 147 bp of DNA. Monoubiquitination of Lys-116 gives a specific tag for epigenetic transcriptional activation and is also prerequisite for histone H3 'Lys-4' and 'Lys-79' methylation. In terms of processing, glcNAcylation at Ser-108 promotes monoubiquitination of Lys-116. It fluctuates in response to extracellular glucose, and associates with transcribed genes.

The protein localises to the nucleus. The protein resides in the chromosome. Core component of nucleosome. Nucleosomes wrap and compact DNA into chromatin, limiting DNA accessibility to the cellular machineries which require DNA as a template. Histones thereby play a central role in transcription regulation, DNA repair, DNA replication and chromosomal stability. DNA accessibility is regulated via a complex set of post-translational modifications of histones, also called histone code, and nucleosome remodeling. The chain is Histone H2B, sperm from Marthasterias glacialis (Spiny starfish).